A 533-amino-acid chain; its full sequence is Putative amidase C550.07 (533 aa).

Residues Lys-132 and Ser-207 each act as charge relay system in the active site. Catalysis depends on Ser-231, which acts as the Acyl-ester intermediate.

Belongs to the amidase family.

It localises to the cytoplasm. It is found in the nucleus. The enzyme catalyses a monocarboxylic acid amide + H2O = a monocarboxylate + NH4(+). This is Putative amidase C550.07 from Schizosaccharomyces pombe (strain 972 / ATCC 24843) (Fission yeast).